The primary structure comprises 505 residues: Aminoaldehyde dehydrogenase 2 (505 aa).

The Na(+) site is built by Ile-31 and Asp-99. NAD(+)-binding positions include 159–161 (TPW) and 185–188 (KPSE). Residue Leu-189 participates in Na(+) binding. An NAD(+)-binding site is contributed by 238–242 (GSGPT). Residue Glu-260 is the Proton acceptor of the active site. Leu-261 contacts NAD(+). Cys-295 functions as the Nucleophile in the catalytic mechanism. NAD(+) is bound by residues Glu-394 and Trp-460.

Belongs to the aldehyde dehydrogenase family. As to quaternary structure, forms homodimers.

It carries out the reaction 4-aminobutanal + NAD(+) + H2O = 4-aminobutanoate + NADH + 2 H(+). It catalyses the reaction 3-aminopropanal + NAD(+) + H2O = beta-alanine + NADH + 2 H(+). The catalysed reaction is 4-(trimethylamino)butanal + NAD(+) + H2O = 4-(trimethylamino)butanoate + NADH + 2 H(+). The enzyme catalyses 4-guanidinobutanal + NAD(+) + H2O = 4-guanidinobutanoate + NADH + 2 H(+). It functions in the pathway amine and polyamine biosynthesis; betaine biosynthesis via choline pathway; betaine from betaine aldehyde: step 1/1. In terms of biological role, dehydrogenase that catalyzes the oxidation of several aminoaldehydes. Metabolizes and detoxifies aldehyde products of polyamine degradation to non-toxic amino acids. Catalyzes the oxidation of 4-aminobutanal and 3-aminopropanal to 4-aminobutanoate and beta-alanine, respectively. Catalyzes the oxidation of 4-(trimethylamino)butanal and 4-guanidinobutanal to 4-trimethylammoniobutanoate and 4-guanidinobutanoate, respectively. The protein is Aminoaldehyde dehydrogenase 2 of Solanum lycopersicum (Tomato).